The chain runs to 420 residues: Methylaspartate ammonia-lyase 1 (420 aa).

Gln173 is a (2S,3S)-3-methyl-L-aspartate binding site. Mg(2+) contacts are provided by Asp237, Glu272, and Asp306. Residue Gln328 participates in (2S,3S)-3-methyl-L-aspartate binding. Residue Lys330 is the Proton acceptor of the active site. 359–360 (SC) is a (2S,3S)-3-methyl-L-aspartate binding site.

In terms of assembly, homodimer. Mg(2+) is required as a cofactor.

It carries out the reaction (2S,3S)-3-methyl-L-aspartate = mesaconate + NH4(+). It participates in amino-acid degradation; L-glutamate degradation via mesaconate pathway; acetate and pyruvate from L-glutamate: step 2/4. In terms of biological role, involved in the methylaspartate cycle. Catalyzes the formation of the alpha,beta-unsaturated bond by the reversible anti elimination of ammonia from L-threo-beta-methylaspartate (L-threo-(2S,3S)-3-methylaspartate) to give mesaconate. It can also catalyze the amination of fumarate and ethylfumarate, and the deamination of hydroxylamine, hydrazine, methylamine and ethylamine. This Carboxydothermus hydrogenoformans (strain ATCC BAA-161 / DSM 6008 / Z-2901) protein is Methylaspartate ammonia-lyase 1.